The following is a 113-amino-acid chain: Large ribosomal subunit protein uL22 (113 aa).

Belongs to the universal ribosomal protein uL22 family. Part of the 50S ribosomal subunit.

Functionally, this protein binds specifically to 23S rRNA; its binding is stimulated by other ribosomal proteins, e.g. L4, L17, and L20. It is important during the early stages of 50S assembly. It makes multiple contacts with different domains of the 23S rRNA in the assembled 50S subunit and ribosome. The globular domain of the protein is located near the polypeptide exit tunnel on the outside of the subunit, while an extended beta-hairpin is found that lines the wall of the exit tunnel in the center of the 70S ribosome. This is Large ribosomal subunit protein uL22 from Roseiflexus castenholzii (strain DSM 13941 / HLO8).